The following is a 94-amino-acid chain: Small ribosomal subunit protein uS19 (94 aa).

The protein belongs to the universal ribosomal protein uS19 family.

Its function is as follows. Protein S19 forms a complex with S13 that binds strongly to the 16S ribosomal RNA. This is Small ribosomal subunit protein uS19 from Desulforudis audaxviator (strain MP104C).